An 89-amino-acid polypeptide reads, in one-letter code: Co-chaperonin GroES (89 aa).

Belongs to the GroES chaperonin family. Heptamer of 7 subunits arranged in a ring. Interacts with the chaperonin GroEL.

Its subcellular location is the cytoplasm. Together with the chaperonin GroEL, plays an essential role in assisting protein folding. The GroEL-GroES system forms a nano-cage that allows encapsulation of the non-native substrate proteins and provides a physical environment optimized to promote and accelerate protein folding. GroES binds to the apical surface of the GroEL ring, thereby capping the opening of the GroEL channel. This chain is Co-chaperonin GroES, found in Porphyromonas gingivalis (strain ATCC 33277 / DSM 20709 / CIP 103683 / JCM 12257 / NCTC 11834 / 2561).